The sequence spans 213 residues: V-type proton ATPase subunit c'' (213 aa).

Over 1–14 the chain is Vacuolar; it reads MNKESKDDDMSLGK. The chain crosses the membrane as a helical span at residues 15–35; the sequence is FSFSHFLYYLVLIVVIVYGLY. The Cytoplasmic segment spans residues 36–61; it reads KLFTGHGSDINFGKFLLRTSPYMWAN. A helical transmembrane segment spans residues 62 to 82; that stretch reads LGIALCVGLSVVGAAWGIFIT. Over 83–100 the chain is Vacuolar; it reads GSSMIGAGVRAPRITTKN. The chain crosses the membrane as a helical span at residues 101 to 121; sequence LISIIFCEVVAIYGLIIAIVF. Residues 122–144 are Cytoplasmic-facing; the sequence is SSKLTVATAENMYSKSNLYTGYS. Residues 145 to 165 traverse the membrane as a helical segment; sequence LFWAGITVGASNLICGIAVGI. The Vacuolar segment spans residues 166–183; the sequence is TGATAAISDAADSALFVK. Residues 184–204 form a helical membrane-spanning segment; sequence ILVIEIFGSILGLLGLIVGLL. Residues 205 to 213 are Cytoplasmic-facing; the sequence is MAGKASEFQ.

The protein belongs to the V-ATPase proteolipid subunit family. As to quaternary structure, V-ATPase is a heteromultimeric enzyme composed of a peripheral catalytic V1 complex (components A to H) attached to an integral membrane V0 proton pore complex (components: a, c, c', c'', d, e, f and VOA1). The decameric c-ring forms the proton-conducting pore, and is composed of eight proteolipid subunits c, one subunit c' and one subunit c''.

It localises to the vacuole membrane. In terms of biological role, proton-conducting pore forming subunit of the V0 complex of vacuolar(H+)-ATPase (V-ATPase), a multisubunit enzyme composed of a peripheral complex (V1) that hydrolyzes ATP and a membrane integral complex (V0) that translocates protons. V-ATPase is responsible for acidifying and maintaining the pH of intracellular compartments. The protein is V-type proton ATPase subunit c'' (VMA16) of Saccharomyces cerevisiae (strain ATCC 204508 / S288c) (Baker's yeast).